The primary structure comprises 697 residues: Serine/threonine-protein kinase tousled-like 2 (697 aa).

Disordered stretches follow at residues 27–136 and 289–315; these read KAPL…TAPV and LAKR…NKTN. The segment covering 31–44 has biased composition (polar residues); that stretch reads NSESSNQSLCSLGS. Positions 46–62 are enriched in basic and acidic residues; that stretch reads SDKELEQTPEKKQNDQR. Residues 111–131 show a composition bias toward low complexity; the sequence is SSPQHSLSNPLPLPSQQCSPP. 2 coiled-coil regions span residues 264 to 293 and 334 to 372; these read AFQN…AKRK and FKLR…IHNE. Residues 387–666 form the Protein kinase domain; it reads YLLLHLLGRG…VQQLACDPYL (280 aa). ATP contacts are provided by residues 393–401 and lysine 416; that span reads LGRGGFSEV. The Proton acceptor role is filled by aspartate 517.

This sequence belongs to the protein kinase superfamily. Ser/Thr protein kinase family. In terms of assembly, monomer. May form homodimers; homodimerization may enhance autophosphoylation and enzymatic activity. Heterodimer with TLK1. The cofactor is Mg(2+). Post-translationally, phosphorylated. Autophosphorylated; phosphorylation promotes the assembly of higher order oligomers and enzymatic activity.

It localises to the nucleus. The protein resides in the nucleoplasm. Its subcellular location is the cytoplasm. It is found in the perinuclear region. The protein localises to the cytoskeleton. The enzyme catalyses L-seryl-[protein] + ATP = O-phospho-L-seryl-[protein] + ADP + H(+). It catalyses the reaction L-threonyl-[protein] + ATP = O-phospho-L-threonyl-[protein] + ADP + H(+). Functionally, serine/threonine-protein kinase involved in the process of chromatin assembly and probably also DNA replication, transcription, repair, and chromosome segregation. Negative regulator of amino acid starvation-induced autophagy. The polypeptide is Serine/threonine-protein kinase tousled-like 2 (Xenopus tropicalis (Western clawed frog)).